The primary structure comprises 275 residues: Leucine-rich repeat-containing protein 3C (275 aa).

Positions 1–41 (MRMTSSSFVSYCTPGLCQFMAMLPTAGHLLPLLLVIGTGGT) are cleaved as a signal peptide. An LRRNT domain is found at 42–79 (VPSPQVPPRGCYVAKEAGERTFRCSQAGLSAVPSGIPN). 3 LRR repeats span residues 80–101 (DTRK…AFQH), 104–125 (VLEE…AFQG), and 129–150 (TLRH…AFVG). Asn-156 is a glycosylation site (N-linked (GlcNAc...) asparagine). The LRRCT domain maps to 160–212 (NPWHCDCALQEVLRQVRLVPGTGTGIVCGSGARPDLVGQEFLLLAGEEELCGS). Residues 225–245 (LLVTMGGWLTLMVAYLVHYVW) traverse the membrane as a helical segment.

Belongs to the LRRC3 family.

It is found in the membrane. In Homo sapiens (Human), this protein is Leucine-rich repeat-containing protein 3C (LRRC3C).